The following is a 225-amino-acid chain: Orotate phosphoribosyltransferase (225 aa).

Lys29 is a 5-phospho-alpha-D-ribose 1-diphosphate binding site. Residue 37–38 (FF) coordinates orotate. 5-phospho-alpha-D-ribose 1-diphosphate contacts are provided by residues 75–76 (YK), Arg105, Lys106, Lys109, His111, and 130–138 (DDVITAGTS). Orotate-binding residues include Thr134 and Arg162.

Belongs to the purine/pyrimidine phosphoribosyltransferase family. PyrE subfamily. Homodimer. Requires Mg(2+) as cofactor.

It carries out the reaction orotidine 5'-phosphate + diphosphate = orotate + 5-phospho-alpha-D-ribose 1-diphosphate. Its pathway is pyrimidine metabolism; UMP biosynthesis via de novo pathway; UMP from orotate: step 1/2. Functionally, catalyzes the transfer of a ribosyl phosphate group from 5-phosphoribose 1-diphosphate to orotate, leading to the formation of orotidine monophosphate (OMP). The protein is Orotate phosphoribosyltransferase of Bordetella petrii (strain ATCC BAA-461 / DSM 12804 / CCUG 43448).